The primary structure comprises 356 residues: Riboflavin biosynthesis protein RibD (356 aa).

The tract at residues 1-148 (MIREIDKNYM…EDFFTYITQE (148 aa)) is deaminase. The CMP/dCMP-type deaminase domain maps to 4–126 (EIDKNYMKLA…KLRNAGIEVD (123 aa)). Residue histidine 53 coordinates Zn(2+). The active-site Proton donor is glutamate 55. Positions 78 and 87 each coordinate Zn(2+). Positions 149 to 356 (RPYITLKWAQ…EDLVIFFKRY (208 aa)) are reductase. Alanine 157 contacts NADP(+). Substrate is bound at residue serine 171. Tryptophan 173 is a binding site for NADP(+). Arginine 187 is a binding site for substrate. Threonine 199 and aspartate 203 together coordinate NADP(+). Substrate contacts are provided by leucine 207, arginine 210, and glutamate 290. 292–298 (GPRTLTS) contributes to the NADP(+) binding site.

It in the N-terminal section; belongs to the cytidine and deoxycytidylate deaminase family. This sequence in the C-terminal section; belongs to the HTP reductase family. Zn(2+) serves as cofactor.

The catalysed reaction is 2,5-diamino-6-hydroxy-4-(5-phosphoribosylamino)-pyrimidine + H2O + H(+) = 5-amino-6-(5-phospho-D-ribosylamino)uracil + NH4(+). It catalyses the reaction 5-amino-6-(5-phospho-D-ribitylamino)uracil + NADP(+) = 5-amino-6-(5-phospho-D-ribosylamino)uracil + NADPH + H(+). It participates in cofactor biosynthesis; riboflavin biosynthesis; 5-amino-6-(D-ribitylamino)uracil from GTP: step 2/4. Its pathway is cofactor biosynthesis; riboflavin biosynthesis; 5-amino-6-(D-ribitylamino)uracil from GTP: step 3/4. In terms of biological role, converts 2,5-diamino-6-(ribosylamino)-4(3h)-pyrimidinone 5'-phosphate into 5-amino-6-(ribosylamino)-2,4(1h,3h)-pyrimidinedione 5'-phosphate. This Aquifex aeolicus (strain VF5) protein is Riboflavin biosynthesis protein RibD (ribD).